The chain runs to 343 residues: Heat-inducible transcription repressor HrcA (343 aa).

It belongs to the HrcA family.

Negative regulator of class I heat shock genes (grpE-dnaK-dnaJ and groELS operons). Prevents heat-shock induction of these operons. This chain is Heat-inducible transcription repressor HrcA, found in Alkaliphilus metalliredigens (strain QYMF).